A 150-amino-acid chain; its full sequence is Protein adenylyltransferase MntA (150 aa).

The GSX(10)DXD motif motif lies at 32-46 (GSRATGNINANSDWD). Catalysis depends on residues Asp44 and Asp46. Asp44, Asp46, and Asp86 together coordinate Mg(2+).

The protein belongs to the MntA antitoxin family. In terms of assembly, forms a complex with HepT, probably MntA(1):HepT(2) in vivo; can only be purified when both 'Arg-102' and 'Tyr-109' (or 'His-107' and 'Tyr-109') of HepThave been mutated. The fully di-AMPylated HepT homodimer is not found in a complex with MntA. Requires Mg(2+) as cofactor.

The enzyme catalyses L-tyrosyl-[protein] + ATP = O-(5'-adenylyl)-L-tyrosyl-[protein] + diphosphate. It carries out the reaction O-(5'-adenylyl)-L-tyrosyl-[protein] + ATP = O-[5'-(adenylyl-(5'-&gt;3')-adenylyl)]-L-tyrosyl-[protein] + diphosphate. Antitoxin component of a type VII toxin-antitoxin (TA) system. Upon cloning in E.coli neutralizes the effect of cognate toxin HepT. Neutralization is mostly due to di-AMPylation of toxin by this enzyme. Successively di-AMPylates HepT on 'Tyr-109'. In vitro will use ATP, dATP, GTP, dGTP, TTP or UTP to generate a mono-modified protein, but requires a purine nucleotide for the second modification reaction (ATP, dATP or GTP). The polypeptide is Protein adenylyltransferase MntA (Aphanizomenon flos-aquae (strain 2012/KM1/D3)).